The sequence spans 396 residues: Imidazolonepropionase (396 aa).

Fe(3+) is bound by residues histidine 69 and histidine 71. Residues histidine 69 and histidine 71 each coordinate Zn(2+). Positions 78, 136, and 163 each coordinate 4-imidazolone-5-propanoate. Residue tyrosine 136 coordinates N-formimidoyl-L-glutamate. Histidine 224 contributes to the Fe(3+) binding site. Histidine 224 contacts Zn(2+). Glutamine 227 is a binding site for 4-imidazolone-5-propanoate. Position 298 (aspartate 298) interacts with Fe(3+). Aspartate 298 lines the Zn(2+) pocket. 2 residues coordinate N-formimidoyl-L-glutamate: asparagine 300 and glycine 302. Position 303 (threonine 303) interacts with 4-imidazolone-5-propanoate.

The protein belongs to the metallo-dependent hydrolases superfamily. HutI family. It depends on Zn(2+) as a cofactor. Fe(3+) serves as cofactor.

Its subcellular location is the cytoplasm. The enzyme catalyses 4-imidazolone-5-propanoate + H2O = N-formimidoyl-L-glutamate. The protein operates within amino-acid degradation; L-histidine degradation into L-glutamate; N-formimidoyl-L-glutamate from L-histidine: step 3/3. Catalyzes the hydrolytic cleavage of the carbon-nitrogen bond in imidazolone-5-propanoate to yield N-formimidoyl-L-glutamate. It is the third step in the universal histidine degradation pathway. This Cutibacterium acnes (strain DSM 16379 / KPA171202) (Propionibacterium acnes) protein is Imidazolonepropionase.